A 53-amino-acid chain; its full sequence is Large ribosomal subunit protein eL40 (53 aa).

The protein belongs to the eukaryotic ribosomal protein eL40 family.

The chain is Large ribosomal subunit protein eL40 from Pyrobaculum calidifontis (strain DSM 21063 / JCM 11548 / VA1).